Consider the following 1178-residue polypeptide: Mannosyltransferase regulator 4 (1178 aa).

Over 1 to 27 the chain is Cytoplasmic; sequence MLQRISSKLHRRFLSGLLRVKHYPLRR. The helical; Signal-anchor for type II membrane protein transmembrane segment at 28-48 threads the bilayer; that stretch reads ILLPLILLQIIIITFIWSNSP. The Lumenal portion of the chain corresponds to 49–1178; sequence QRNGLGRDAD…KKKQEEGHSN (1130 aa). The DXD motif lies at 519–521; the sequence is DFD. The segment at 1041–1178 is disordered; that stretch reads EKKKKEEEEK…KKKQEEGHSN (138 aa). 6 consecutive repeat copies span residues 1042–1049, 1050–1057, 1058–1065, 1066–1073, 1074–1081, and 1082–1089. A 17 X 8 AA tandem repeats of K-K-K-K-E-E-E-E region spans residues 1042–1174; that stretch reads KKKKEEEEKK…EEEEKKKQEE (133 aa). Residues 1090 to 1097 form a 7; approximate repeat; sequence KKKQEEEE. Repeat unit 8 spans residues 1098-1105; the sequence is KKKKEEEE. The stretch at 1106–1113 is one 9; approximate repeat; that stretch reads KKKQEEGE. Residues 1114 to 1121 form a 10; approximate repeat; sequence KMKNEDEE. Residues 1122–1129 form an 11; approximate repeat; it reads NKKNEDEE. Residues 1130–1137 form repeat 12; that stretch reads KKKNEEEE. The 13; approximate repeat unit spans residues 1138–1144; that stretch reads KKKQEEK. A 14; approximate repeat occupies 1145–1152; the sequence is NKKNEDEE. A 15; approximate repeat occupies 1153 to 1160; sequence KKKQEEEE. The stretch at 1161–1168 is one 16; approximate repeat; it reads KKKNEEEE. A 17; truncated repeat occupies 1169–1174; sequence KKKQEE.

Belongs to the MNN4 family.

The protein localises to the golgi apparatus membrane. Functionally, golgi apparatus protein involved in N-glycan mannosylphosphorylation. While MNN4 seems to have a regulatory role in N-glycan mannosylphosphorylation, a transferase activity of MNN4 can not be ruled out. Mediates mannosylphosphate transfer in both the core and outer chain portions of N-linked oligosaccharides. Has partially redundant function with MNN14. This is Mannosyltransferase regulator 4 from Saccharomyces cerevisiae (strain ATCC 204508 / S288c) (Baker's yeast).